A 113-amino-acid chain; its full sequence is Nucleoid-associated protein CLJ_B0037 (113 aa).

The span at E93 to R102 shows a compositional bias: basic and acidic residues. A disordered region spans residues E93–F113.

Belongs to the YbaB/EbfC family. As to quaternary structure, homodimer.

Its subcellular location is the cytoplasm. The protein localises to the nucleoid. Binds to DNA and alters its conformation. May be involved in regulation of gene expression, nucleoid organization and DNA protection. The sequence is that of Nucleoid-associated protein CLJ_B0037 from Clostridium botulinum (strain 657 / Type Ba4).